The following is a 279-amino-acid chain: Biotin synthase (279 aa).

The Radical SAM core domain occupies 2-228; the sequence is KTIMLCAICS…ETRVMIAGGR (227 aa). The [4Fe-4S] cluster site is built by Cys17, Cys21, and Cys24. 4 residues coordinate [2Fe-2S] cluster: Cys61, Cys96, Cys154, and Arg221.

Belongs to the radical SAM superfamily. Biotin synthase family. Homodimer. [4Fe-4S] cluster is required as a cofactor. [2Fe-2S] cluster serves as cofactor.

It catalyses the reaction (4R,5S)-dethiobiotin + (sulfur carrier)-SH + 2 reduced [2Fe-2S]-[ferredoxin] + 2 S-adenosyl-L-methionine = (sulfur carrier)-H + biotin + 2 5'-deoxyadenosine + 2 L-methionine + 2 oxidized [2Fe-2S]-[ferredoxin]. It functions in the pathway cofactor biosynthesis; biotin biosynthesis; biotin from 7,8-diaminononanoate: step 2/2. Its function is as follows. Catalyzes the conversion of dethiobiotin (DTB) to biotin by the insertion of a sulfur atom into dethiobiotin via a radical-based mechanism. In Campylobacter concisus (strain 13826), this protein is Biotin synthase.